Consider the following 119-residue polypeptide: Ribonuclease P protein component (119 aa).

Belongs to the RnpA family. Consists of a catalytic RNA component (M1 or rnpB) and a protein subunit.

It catalyses the reaction Endonucleolytic cleavage of RNA, removing 5'-extranucleotides from tRNA precursor.. Functionally, RNaseP catalyzes the removal of the 5'-leader sequence from pre-tRNA to produce the mature 5'-terminus. It can also cleave other RNA substrates such as 4.5S RNA. The protein component plays an auxiliary but essential role in vivo by binding to the 5'-leader sequence and broadening the substrate specificity of the ribozyme. The protein is Ribonuclease P protein component of Halalkalibacterium halodurans (strain ATCC BAA-125 / DSM 18197 / FERM 7344 / JCM 9153 / C-125) (Bacillus halodurans).